The primary structure comprises 352 residues: uncharacterized protein (352 aa).

The transit peptide at 1 to 55 (MAMAALTSSSSAITLLNKPFLPNRSSFFSSDSQSPLLRFSASTSVRSRFPSAAIS) directs the protein to the chloroplast.

The protein belongs to the methyltransferase superfamily.

It is found in the plastid. The protein localises to the chloroplast. It localises to the plastoglobule. This is an uncharacterized protein from Arabidopsis thaliana (Mouse-ear cress).